A 338-amino-acid polypeptide reads, in one-letter code: Nicotinate-nucleotide--dimethylbenzimidazole phosphoribosyltransferase (338 aa).

Glu305 (proton acceptor) is an active-site residue.

This sequence belongs to the CobT family.

The enzyme catalyses 5,6-dimethylbenzimidazole + nicotinate beta-D-ribonucleotide = alpha-ribazole 5'-phosphate + nicotinate + H(+). The protein operates within nucleoside biosynthesis; alpha-ribazole biosynthesis; alpha-ribazole from 5,6-dimethylbenzimidazole: step 1/2. Catalyzes the synthesis of alpha-ribazole-5'-phosphate from nicotinate mononucleotide (NAMN) and 5,6-dimethylbenzimidazole (DMB). This is Nicotinate-nucleotide--dimethylbenzimidazole phosphoribosyltransferase from Rhizobium etli (strain ATCC 51251 / DSM 11541 / JCM 21823 / NBRC 15573 / CFN 42).